A 189-amino-acid chain; its full sequence is Potassium-transporting ATPase KdpC subunit (189 aa).

A helical membrane pass occupies residues 10 to 30; sequence ITLVFCVFFSVFYILILWLFA.

The protein belongs to the KdpC family. As to quaternary structure, the system is composed of three essential subunits: KdpA, KdpB and KdpC.

The protein resides in the cell inner membrane. Functionally, part of the high-affinity ATP-driven potassium transport (or Kdp) system, which catalyzes the hydrolysis of ATP coupled with the electrogenic transport of potassium into the cytoplasm. This subunit acts as a catalytic chaperone that increases the ATP-binding affinity of the ATP-hydrolyzing subunit KdpB by the formation of a transient KdpB/KdpC/ATP ternary complex. In Bacteroides thetaiotaomicron (strain ATCC 29148 / DSM 2079 / JCM 5827 / CCUG 10774 / NCTC 10582 / VPI-5482 / E50), this protein is Potassium-transporting ATPase KdpC subunit.